Here is a 276-residue protein sequence, read N- to C-terminus: Expansin-A25 (276 aa).

The N-terminal stretch at 1–27 is a signal peptide; that stretch reads MKLLEQMVYVECFMIIMATLLVSMSYG. An Expansin-like EG45 domain is found at 73 to 183; sequence QGACGYGDLF…RRISCARTGG (111 aa). One can recognise an Expansin-like CBD domain in the interval 193–272; the sequence is YFLMILPYNV…NWGFGQTFDG (80 aa).

The protein belongs to the expansin family. Expansin A subfamily.

Its subcellular location is the secreted. It localises to the cell wall. It is found in the membrane. In terms of biological role, causes loosening and extension of plant cell walls by disrupting non-covalent bonding between cellulose microfibrils and matrix glucans. No enzymatic activity has been found. The polypeptide is Expansin-A25 (EXPA25) (Arabidopsis thaliana (Mouse-ear cress)).